The following is a 575-amino-acid chain: G2/mitotic-specific cyclin-B3 (575 aa).

The D-box motif lies at arginine 75 to asparagine 83. At serine 215 the chain carries Phosphoserine.

The protein belongs to the cyclin family. Cyclin AB subfamily. As to quaternary structure, interacts with Cdk1 kinase. In terms of processing, ubiquitinated. Ubiquitination leads to its degradation in early anaphase. In embryo, it is expressed in all mitotically proliferating cells, with a high level in neuroblasts. Not expressed in old embryos and thereafter. Not expressed in endoreplicating tissues.

It is found in the nucleus. Its function is as follows. Cyclins are positive regulatory subunits of the cyclin-dependent kinases (CDKs), and thereby play an essential role in the control of the cell cycle, notably via their destruction during cell division. Probably functions redundantly with other cyclins in regulation of cell cycle. Its presence may be required to delay a deadline for completing cytokinesis that is ordinary imposed by nuclear envelope reformation. Degradation of CycB and CycB3 promote cytokinesis furrow initiation and ingression. Required with CycB for female fertility. The sequence is that of G2/mitotic-specific cyclin-B3 (CycB3) from Drosophila melanogaster (Fruit fly).